A 95-amino-acid chain; its full sequence is Aspartyl/glutamyl-tRNA(Asn/Gln) amidotransferase subunit C (95 aa).

This sequence belongs to the GatC family. Heterotrimer of A, B and C subunits.

It catalyses the reaction L-glutamyl-tRNA(Gln) + L-glutamine + ATP + H2O = L-glutaminyl-tRNA(Gln) + L-glutamate + ADP + phosphate + H(+). The catalysed reaction is L-aspartyl-tRNA(Asn) + L-glutamine + ATP + H2O = L-asparaginyl-tRNA(Asn) + L-glutamate + ADP + phosphate + 2 H(+). Allows the formation of correctly charged Asn-tRNA(Asn) or Gln-tRNA(Gln) through the transamidation of misacylated Asp-tRNA(Asn) or Glu-tRNA(Gln) in organisms which lack either or both of asparaginyl-tRNA or glutaminyl-tRNA synthetases. The reaction takes place in the presence of glutamine and ATP through an activated phospho-Asp-tRNA(Asn) or phospho-Glu-tRNA(Gln). The polypeptide is Aspartyl/glutamyl-tRNA(Asn/Gln) amidotransferase subunit C (Jannaschia sp. (strain CCS1)).